Consider the following 428-residue polypeptide: 26S proteasome regulatory subunit 6B homolog (428 aa).

M1 is subject to N-acetylmethionine. G213 to T220 is a binding site for ATP. K280 participates in a covalent cross-link: Glycyl lysine isopeptide (Lys-Gly) (interchain with G-Cter in ubiquitin).

The protein belongs to the AAA ATPase family. Post-translationally, N-acetylated by NAT3.

The protein localises to the cytoplasm. Its subcellular location is the nucleus. Its function is as follows. The 26S proteasome is involved in the ATP-dependent degradation of ubiquitinated proteins. The regulatory (or ATPase) complex confers ATP dependency and substrate specificity to the 26S complex. The sequence is that of 26S proteasome regulatory subunit 6B homolog (RPT3) from Saccharomyces cerevisiae (strain ATCC 204508 / S288c) (Baker's yeast).